Consider the following 387-residue polypeptide: Mannitol-1-phosphate 5-dehydrogenase (387 aa).

3–14 is an NAD(+) binding site; it reads ALHFGAGNIGRG.

Belongs to the mannitol dehydrogenase family.

It carries out the reaction D-mannitol 1-phosphate + NAD(+) = beta-D-fructose 6-phosphate + NADH + H(+). The chain is Mannitol-1-phosphate 5-dehydrogenase from Yersinia pseudotuberculosis serotype O:1b (strain IP 31758).